A 336-amino-acid polypeptide reads, in one-letter code: UPF0324 membrane protein SP_0034 (336 aa).

Helical transmembrane passes span 65-84 (LLQYAVVLLGFGLNISQVFA), 91-113 (PVILSTISIALIIAYLFQRFFAL), 118-140 (ATLVGVGSSICGGSAIAATAPVI), 153-175 (VIFFFNVLAALIFPTLGTWLHLS), 211-233 (SATIVKLTRTLAIIPITLFLSYW), 249-271 (VFPLFILYFILASLLTTLLTSLG), 286-305 (FLIVMAMSAIGLKTNLVAMV), and 312-334 (ILLGAICWIAIILTTLGMQTLIG).

It belongs to the UPF0324 family.

Its subcellular location is the cell membrane. This is UPF0324 membrane protein SP_0034 from Streptococcus pneumoniae serotype 4 (strain ATCC BAA-334 / TIGR4).